The primary structure comprises 387 residues: MKFPSPFTPNSIKIMLLGSGELGKEVIIEAQRLGLETIAVDKYENAPAHGVAHRSYVVNMQDKEALLDLIQKENPTYILPEVEAISLEALLEAEEKGFCVIPSAKAVSLTMNRKGIRTFAAEEVGVKTSQYRFVKTLDELRSAAEEIGYPCVIKPVMSSSGHGQSVCRMAEEIEACFEEAKEARGDSSELIVEEFIPFDYEITLLTLNNGKKITFCDPIGHIQKGGDYIFSWQPAQMKKSVLKKAQKIARDVVSALGGRGIFGVELFIKKNEVYFSEVSPRPHDTGMVTLITQNFSEFALHLRAVLGAPLHVERISAGASAAFKSSQESQTPSVTLPKEAYAKDCDFRVFGKPVSHEGRRMAVLLIKDEEAESALKRAKKLIKKVSE.

Residues 21-22 (EL) and glutamate 81 each bind N(1)-(5-phospho-beta-D-ribosyl)glycinamide. ATP-binding positions include arginine 113, lysine 154, 159-164 (SSGHGQ), 193-196 (EEFI), and glutamate 201. Residues 118–306 (TFAAEEVGVK…EFALHLRAVL (189 aa)) enclose the ATP-grasp domain. Glutamate 265 and glutamate 277 together coordinate Mg(2+). N(1)-(5-phospho-beta-D-ribosyl)glycinamide-binding positions include aspartate 284, lysine 352, and 359–360 (RR).

Belongs to the PurK/PurT family. As to quaternary structure, homodimer.

The enzyme catalyses N(1)-(5-phospho-beta-D-ribosyl)glycinamide + formate + ATP = N(2)-formyl-N(1)-(5-phospho-beta-D-ribosyl)glycinamide + ADP + phosphate + H(+). The protein operates within purine metabolism; IMP biosynthesis via de novo pathway; N(2)-formyl-N(1)-(5-phospho-D-ribosyl)glycinamide from N(1)-(5-phospho-D-ribosyl)glycinamide (formate route): step 1/1. Its function is as follows. Involved in the de novo purine biosynthesis. Catalyzes the transfer of formate to 5-phospho-ribosyl-glycinamide (GAR), producing 5-phospho-ribosyl-N-formylglycinamide (FGAR). Formate is provided by PurU via hydrolysis of 10-formyl-tetrahydrofolate. The sequence is that of Formate-dependent phosphoribosylglycinamide formyltransferase from Wolinella succinogenes (strain ATCC 29543 / DSM 1740 / CCUG 13145 / JCM 31913 / LMG 7466 / NCTC 11488 / FDC 602W) (Vibrio succinogenes).